The following is a 343-amino-acid chain: Ribosomal RNA small subunit methyltransferase C (343 aa).

It belongs to the methyltransferase superfamily. RsmC family. As to quaternary structure, monomer.

The protein resides in the cytoplasm. The enzyme catalyses guanosine(1207) in 16S rRNA + S-adenosyl-L-methionine = N(2)-methylguanosine(1207) in 16S rRNA + S-adenosyl-L-homocysteine + H(+). Its function is as follows. Specifically methylates the guanine in position 1207 of 16S rRNA in the 30S particle. The sequence is that of Ribosomal RNA small subunit methyltransferase C from Shewanella sediminis (strain HAW-EB3).